The following is a 57-amino-acid chain: MLFKSLQSITSVNSIQKNQISSISVGSSQANNNAALLDAAALVVIPGLLTAAAVAHI.

The chain crosses the membrane as a helical span at residues 34–54 (AALLDAAALVVIPGLLTAAAV).

It localises to the membrane. This is an uncharacterized protein from Dictyostelium discoideum (Social amoeba).